The following is an 818-amino-acid chain: Exchange factor for Arf-6 (818 aa).

Disordered stretches follow at residues 92–123, 137–168, 208–291, and 326–383; these read AQKL…ESSP, MEST…ENDD, NHHH…GVSN, and RTTP…VGGE. The span at 107–119 shows a compositional bias: basic and acidic residues; that stretch reads IERRGSLARKTSE. A compositionally biased stretch (acidic residues) spans 140-149; sequence TDVEESEEET. Basic and acidic residues predominate over residues 154 to 165; that stretch reads TDEKENQKKPNE. Polar residues-rich tracts occupy residues 213–223 and 255–269; these read YNSSPQISTLS and MSNN…SPEN. Residues 326 to 347 are compositionally biased toward low complexity; the sequence is RTTPNTAASNSSASASPSLHAT. An SEC7 domain is found at 356 to 532; that stretch reads GVSLRSAESS…KTLFQSIKDN (177 aa). The span at 361–380 shows a compositional bias: polar residues; it reads SAESSNLNQTAVPSTSTNSV. Residues 569 to 681 enclose the PH domain; it reads VEYYSGFLMR…WCEKINFVAA (113 aa). The segment covering 782–799 has biased composition (polar residues); that stretch reads TMNIMMTPTRRQQQNQKP. The segment at 782 to 818 is disordered; sequence TMNIMMTPTRRQQQNQKPVVSEDRLSYTDAVNGAAAH.

As to quaternary structure, interacts (via short N-terminal region) with microtubule-associated proteins tac-1 and zyg-8.

Its subcellular location is the cytoplasm. It is found in the cell cortex. It localises to the cell membrane. Guanine nucleotide exchange factor for arf-6. Involved in response to injury in mechanosensory neurons. Inhibits axon regrowth via microtubule dynamics, possibly by inducing axonal microtubule catastrophes. Limits microtubule growth near the cellular cortex of early embryonic cells. The protein is Exchange factor for Arf-6 of Caenorhabditis elegans.